We begin with the raw amino-acid sequence, 208 residues long: CASP-like protein 2A1 (208 aa).

Topologically, residues 1-36 (MSKMAEQKAAAVDGLGGAGAADAAPAGEAAAARVRP) are cytoplasmic. Residues 37 to 57 (VETLLRAAPLGLCVAAMTVML) traverse the membrane as a helical segment. Residues 58–78 (RDQQSNEYGTVAYSDLGGFKY) lie on the Extracellular side of the membrane. A helical transmembrane segment spans residues 79-99 (LVYANGLCAAYSLVSAFYTAV). Topologically, residues 100 to 108 (PRPATVSRS) are cytoplasmic. The chain crosses the membrane as a helical span at residues 109 to 129 (WVVFLLDQVFTYLILAAGAAA). The Extracellular portion of the chain corresponds to 130 to 161 (AELLYLAYNGDKEVTWSEACGVFGSFCRQART). Residues 162–182 (SVAITFGTVLCFILLSLISSY) form a helical membrane-spanning segment. Topologically, residues 183-208 (RLFSAYEAPPSSALGSKGVEIAAYPR) are cytoplasmic.

It belongs to the Casparian strip membrane proteins (CASP) family. As to quaternary structure, homodimer and heterodimers.

The protein localises to the cell membrane. This chain is CASP-like protein 2A1, found in Sorghum bicolor (Sorghum).